We begin with the raw amino-acid sequence, 151 residues long: Endoribonuclease YbeY (151 aa).

Positions 108, 112, and 118 each coordinate Zn(2+).

It belongs to the endoribonuclease YbeY family. Zn(2+) serves as cofactor.

The protein resides in the cytoplasm. Its function is as follows. Single strand-specific metallo-endoribonuclease involved in late-stage 70S ribosome quality control and in maturation of the 3' terminus of the 16S rRNA. In Porphyromonas gingivalis (strain ATCC BAA-308 / W83), this protein is Endoribonuclease YbeY.